The primary structure comprises 520 residues: GMP synthase [glutamine-hydrolyzing] (520 aa).

In terms of domain architecture, Glutamine amidotransferase type-1 spans 12–205 (KIIVLDYGSQ…AISICGARGD (194 aa)). Cys-89 serves as the catalytic Nucleophile. Catalysis depends on residues His-179 and Glu-181. Residues 206-395 (WSMDNFIDME…LGMPEEIVWR (190 aa)) form the GMPS ATP-PPase domain. 233 to 239 (SGGVDSS) provides a ligand contact to ATP.

Homodimer.

The catalysed reaction is XMP + L-glutamine + ATP + H2O = GMP + L-glutamate + AMP + diphosphate + 2 H(+). It participates in purine metabolism; GMP biosynthesis; GMP from XMP (L-Gln route): step 1/1. In terms of biological role, catalyzes the synthesis of GMP from XMP. This Streptococcus pyogenes serotype M2 (strain MGAS10270) protein is GMP synthase [glutamine-hydrolyzing].